The primary structure comprises 95 residues: uncharacterized protein (95 aa).

Lysine 21 lines the phosphate pocket. Mg(2+) is bound at residue aspartate 44. Asparagine 47 provides a ligand contact to phosphate.

Belongs to the HAD-like hydrolase superfamily. Cof family. Mg(2+) serves as cofactor.

This is an uncharacterized protein from Geobacillus stearothermophilus (Bacillus stearothermophilus).